A 337-amino-acid chain; its full sequence is S-adenosylmethionine:tRNA ribosyltransferase-isomerase (337 aa).

The protein belongs to the QueA family. Monomer.

The protein localises to the cytoplasm. It carries out the reaction 7-aminomethyl-7-carbaguanosine(34) in tRNA + S-adenosyl-L-methionine = epoxyqueuosine(34) in tRNA + adenine + L-methionine + 2 H(+). Its pathway is tRNA modification; tRNA-queuosine biosynthesis. In terms of biological role, transfers and isomerizes the ribose moiety from AdoMet to the 7-aminomethyl group of 7-deazaguanine (preQ1-tRNA) to give epoxyqueuosine (oQ-tRNA). In Legionella pneumophila (strain Paris), this protein is S-adenosylmethionine:tRNA ribosyltransferase-isomerase.